Reading from the N-terminus, the 514-residue chain is CENP-B homolog protein 1 (514 aa).

In terms of domain architecture, HTH CENPB-type spans 69 to 144 (DIKKIRAPKF…RRRHYIQQSA (76 aa)).

The protein localises to the nucleus. It localises to the chromosome. It is found in the centromere. Binds to centromeric K-type repeat DNA and ARS3002 DNA. The CBH-binding consensus sequence is Py-Pu-A-T-A-T-Py-Pu-T-A. This Schizosaccharomyces pombe (strain 972 / ATCC 24843) (Fission yeast) protein is CENP-B homolog protein 1 (cbh1).